We begin with the raw amino-acid sequence, 281 residues long: Phosphatidylserine decarboxylase proenzyme (281 aa).

Residues Asp-90, His-143, and Ser-248 each act as charge relay system; for autoendoproteolytic cleavage activity in the active site. The active-site Schiff-base intermediate with substrate; via pyruvic acid; for decarboxylase activity is Ser-248. Position 248 is a pyruvic acid (Ser); by autocatalysis (Ser-248).

It belongs to the phosphatidylserine decarboxylase family. PSD-B subfamily. Prokaryotic type I sub-subfamily. As to quaternary structure, heterodimer of a large membrane-associated beta subunit and a small pyruvoyl-containing alpha subunit. Pyruvate is required as a cofactor. Post-translationally, is synthesized initially as an inactive proenzyme. Formation of the active enzyme involves a self-maturation process in which the active site pyruvoyl group is generated from an internal serine residue via an autocatalytic post-translational modification. Two non-identical subunits are generated from the proenzyme in this reaction, and the pyruvate is formed at the N-terminus of the alpha chain, which is derived from the carboxyl end of the proenzyme. The autoendoproteolytic cleavage occurs by a canonical serine protease mechanism, in which the side chain hydroxyl group of the serine supplies its oxygen atom to form the C-terminus of the beta chain, while the remainder of the serine residue undergoes an oxidative deamination to produce ammonia and the pyruvoyl prosthetic group on the alpha chain. During this reaction, the Ser that is part of the protease active site of the proenzyme becomes the pyruvoyl prosthetic group, which constitutes an essential element of the active site of the mature decarboxylase.

It localises to the cell membrane. It catalyses the reaction a 1,2-diacyl-sn-glycero-3-phospho-L-serine + H(+) = a 1,2-diacyl-sn-glycero-3-phosphoethanolamine + CO2. It participates in phospholipid metabolism; phosphatidylethanolamine biosynthesis; phosphatidylethanolamine from CDP-diacylglycerol: step 2/2. Catalyzes the formation of phosphatidylethanolamine (PtdEtn) from phosphatidylserine (PtdSer). The sequence is that of Phosphatidylserine decarboxylase proenzyme from Francisella philomiragia subsp. philomiragia (strain ATCC 25017 / CCUG 19701 / FSC 153 / O#319-036).